We begin with the raw amino-acid sequence, 1367 residues long: Phospholipid-transporting ATPase C4F10.16c (1367 aa).

The Cytoplasmic portion of the chain corresponds to 1 to 154 (MPSLINFDAI…PKNLWNQFKN (154 aa)). A disordered region spans residues 34 to 104 (HNGSLAHEGP…KKNEAGTESG (71 aa)). Positions 50–70 (SSRHHESQFSQEAHAEQRSRD) are enriched in basic and acidic residues. Over residues 77 to 92 (FEGSCNNSDQSWTSRV) the composition is skewed to polar residues. Residues 155-172 (IANAFFLFVTLLQCIPLF) traverse the membrane as a helical segment. At 173-177 (CPEHL) the chain is on the lumenal side. A helical membrane pass occupies residues 178-197 (GLSFIPLSVILLTTAIKDGI). Residues 198 to 482 (EDYRRCVLDK…PSKRSRITRD (285 aa)) are Cytoplasmic-facing. Residues 483–503 (LNWTIILNFLLLFAMCLFSGV) traverse the membrane as a helical segment. The Lumenal portion of the chain corresponds to 504 to 531 (LRSIYSAQNNSARVFELSKNSNTAPAHG). A helical membrane pass occupies residues 532–552 (IISIFTSLILFQNLVPISLYI). The Cytoplasmic segment spans residues 553–1091 (TMDIVRSIQS…GRWDYKRMSQ (539 aa)). Asp-600 acts as the 4-aspartylphosphate intermediate in catalysis. 15 residues coordinate ATP: Asp-600, Lys-601, Thr-602, Glu-724, Phe-765, Ser-767, Lys-770, Lys-788, Arg-822, Thr-823, Thr-902, Gly-903, Asp-904, Arg-1009, and Lys-1015. Asp-600 serves as a coordination point for Mg(2+). Thr-602 lines the Mg(2+) pocket. Asp-1035 provides a ligand contact to Mg(2+). ATP-binding residues include Asn-1038 and Asp-1039. Asp-1039 is a Mg(2+) binding site. Residues 1092–1112 (MISFFFYKNVIWTFILFWYQF) traverse the membrane as a helical segment. Over 1113–1124 (YNEFDGNYIFDY) the chain is Lumenal. A helical membrane pass occupies residues 1125 to 1145 (TYVMLFNLLFTSLPVIIAGCF). Topologically, residues 1146–1174 (DQDVDASVSMKNPSLYQRGILGLEWNGKR) are cytoplasmic. A helical transmembrane segment spans residues 1175–1197 (FWSYMLDGIYQSLVCFGVALFVF). Residues 1198 to 1212 (KFGDFVSWTGRNIEC) lie on the Lumenal side of the membrane. A helical transmembrane segment spans residues 1213–1233 (IEDIGLFISSPTIFVINIFIL). The Cytoplasmic segment spans residues 1234 to 1240 (MNQERLN). The chain crosses the membrane as a helical span at residues 1241 to 1261 (LISLITWMFSIGVFWIWTFIY). The Lumenal segment spans residues 1262–1276 (SEVGPSYAFHKSASR). Residues 1277-1297 (TCQTFGFWCVTVLTIALCLLP) traverse the membrane as a helical segment. Arg-1298 is an a 1,2-diacyl-sn-glycero-3-phospho-L-serine binding site. The Cytoplasmic segment spans residues 1298–1367 (RFSYICLQKL…TSVSFDDSNK (70 aa)).

This sequence belongs to the cation transport ATPase (P-type) (TC 3.A.3) family. Type IV subfamily. Mg(2+) is required as a cofactor.

Its subcellular location is the cell membrane. The protein resides in the endoplasmic reticulum membrane. The enzyme catalyses ATP + H2O + phospholipidSide 1 = ADP + phosphate + phospholipidSide 2.. The catalysed reaction is a 1,2-diacyl-sn-glycero-3-phosphoethanolamine(out) + ATP + H2O = a 1,2-diacyl-sn-glycero-3-phosphoethanolamine(in) + ADP + phosphate + H(+). It catalyses the reaction a 1,2-diacyl-sn-glycero-3-phosphocholine(out) + ATP + H2O = a 1,2-diacyl-sn-glycero-3-phosphocholine(in) + ADP + phosphate + H(+). It carries out the reaction a beta-D-glucosyl-(1&lt;-&gt;1')-N-acylsphing-4-enine(out) + ATP + H2O = a beta-D-glucosyl-(1&lt;-&gt;1')-N-acylsphing-4-enine(in) + ADP + phosphate + H(+). The enzyme catalyses a 1,2-diacyl-sn-glycero-3-phospho-L-serine(out) + ATP + H2O = a 1,2-diacyl-sn-glycero-3-phospho-L-serine(in) + ADP + phosphate + H(+). Catalytic component of a P4-ATPase flippase complex which catalyzes the hydrolysis of ATP coupled to the transport of glucosylceramide, phosphatidylcholine, phosphatidylethanolamine, and small amounts of phosphatidylserine from the lumenal to the cytosolic leaflet of the cell membrane and ensures the maintenance of asymmetric distribution of phospholipids. The polypeptide is Phospholipid-transporting ATPase C4F10.16c (Schizosaccharomyces pombe (strain 972 / ATCC 24843) (Fission yeast)).